The following is a 669-amino-acid chain: DNA ligase (669 aa).

Residues 34-38 (DAEYD), 83-84 (SL), and E114 contribute to the NAD(+) site. K116 serves as the catalytic N6-AMP-lysine intermediate. 4 residues coordinate NAD(+): R137, E171, K287, and K311. C405, C408, C423, and C428 together coordinate Zn(2+). The BRCT domain maps to 591–669 (NVESYFAGKT…EERFLQELNK (79 aa)).

This sequence belongs to the NAD-dependent DNA ligase family. LigA subfamily. Requires Mg(2+) as cofactor. Mn(2+) is required as a cofactor.

It carries out the reaction NAD(+) + (deoxyribonucleotide)n-3'-hydroxyl + 5'-phospho-(deoxyribonucleotide)m = (deoxyribonucleotide)n+m + AMP + beta-nicotinamide D-nucleotide.. Its function is as follows. DNA ligase that catalyzes the formation of phosphodiester linkages between 5'-phosphoryl and 3'-hydroxyl groups in double-stranded DNA using NAD as a coenzyme and as the energy source for the reaction. It is essential for DNA replication and repair of damaged DNA. This chain is DNA ligase, found in Bacillus mycoides (strain KBAB4) (Bacillus weihenstephanensis).